Consider the following 578-residue polypeptide: Zinc finger protein with KRAB and SCAN domains 8 (578 aa).

A disordered region spans residues 1 to 20 (MAEESRKPSAPSPPDQTPEE). S12 carries the post-translational modification Phosphoserine. Residue K26 forms a Glycyl lysine isopeptide (Lys-Gly) (interchain with G-Cter in SUMO2) linkage. The SCAN box domain occupies 51 to 133 (RLRFRQLCYQ…TLLEDLERQI (83 aa)). The segment at 158-205 (ASAPEPPNTQLQSEATQHKSPVPQESQERSMSTSQSPTRSQKGSSGDQ) is disordered. Polar residues predominate over residues 165 to 205 (NTQLQSEATQHKSPVPQESQERSMSTSQSPTRSQKGSSGDQ). Residues K176 and K199 each participate in a glycyl lysine isopeptide (Lys-Gly) (interchain with G-Cter in SUMO2) cross-link. Phosphoserine is present on S201. The KRAB domain maps to 220–316 (EKIEDMAVSL…GRLERQRGNP (97 aa)). Residues K221, K272, and K288 each participate in a glycyl lysine isopeptide (Lys-Gly) (interchain with G-Cter in SUMO2) cross-link. 2 consecutive C2H2-type zinc fingers follow at residues 322–344 (HKCD…WRIH) and 350–372 (YQCN…QDIH). Residues K374 and K376 each participate in a glycyl lysine isopeptide (Lys-Gly) (interchain with G-Cter in SUMO2) cross-link. 7 C2H2-type zinc fingers span residues 378–400 (YHCK…QRIH), 406–428 (YQCN…QRIH), 434–456 (YECN…QRIH), 462–484 (YECD…QRSH), 490–512 (YKCN…QRIH), 518–540 (YKCK…LRIH), and 546–568 (YQCN…QRIH). Glycyl lysine isopeptide (Lys-Gly) (interchain with G-Cter in SUMO2) cross-links involve residues K413 and K441. Residue K502 forms a Glycyl lysine isopeptide (Lys-Gly) (interchain with G-Cter in SUMO2) linkage. Residue K572 forms a Glycyl lysine isopeptide (Lys-Gly) (interchain with G-Cter in SUMO2) linkage.

The protein belongs to the krueppel C2H2-type zinc-finger protein family.

It localises to the nucleus. Its function is as follows. May be involved in transcriptional regulation. The protein is Zinc finger protein with KRAB and SCAN domains 8 (ZKSCAN8) of Pan paniscus (Pygmy chimpanzee).